Consider the following 451-residue polypeptide: Cyclin-dependent kinase 14 (451 aa).

S60 and S77 each carry phosphoserine. Positions 84-114 are disordered; the sequence is NFKTSSTGKESPKVRRHSSPSSPTSPKFGKA. A Phosphoserine modification is found at S116. The Protein kinase domain occupies 117 to 401; it reads YEKLEKLGEG…AQAALSHEYF (285 aa). ATP-binding positions include 123 to 131 and K146; that span reads LGEGSYATV. Catalysis depends on D238, which acts as the Proton acceptor.

This sequence belongs to the protein kinase superfamily. CMGC Ser/Thr protein kinase family. CDC2/CDKX subfamily. In terms of assembly, found in a complex with LRP6, CCNY and CAPRIN2 during G2/M stage; CAPRIN2 functions as a scaffold for the complex by binding to CCNY via its N terminus and to CDK14 via its C terminus. Interacts with CCNY; CCNY mediates its recruitment to the plasma membrane and promotes phosphorylation of LRP6. Interacts with CCDN3 and CDKN1A. Interacts with SEPT8. Interacts with 14-3-3 proteina YWHAB, YWHAE, YWHAH and YWHAQ.

The protein localises to the cell membrane. It is found in the cytoplasm. The protein resides in the nucleus. The catalysed reaction is L-seryl-[protein] + ATP = O-phospho-L-seryl-[protein] + ADP + H(+). It carries out the reaction L-threonyl-[protein] + ATP = O-phospho-L-threonyl-[protein] + ADP + H(+). Serine/threonine-protein kinase activity is promoted by associated cyclins CCDN3 and CCNY and repressed by CDKN1A. Its function is as follows. Serine/threonine-protein kinase involved in the control of the eukaryotic cell cycle, whose activity is controlled by an associated cyclin. Acts as a cell-cycle regulator of Wnt signaling pathway during G2/M phase by mediating the phosphorylation of LRP6 at 'Ser-1490', leading to the activation of the Wnt signaling pathway. Acts as a regulator of cell cycle progression and cell proliferation via its interaction with CCDN3. Phosphorylates RB1 in vitro, however the relevance of such result remains to be confirmed in vivo. May also play a role in meiosis, neuron differentiation and may indirectly act as a negative regulator of insulin-responsive glucose transport. In Plecturocebus moloch (Dusky titi monkey), this protein is Cyclin-dependent kinase 14 (CDK14).